The primary structure comprises 313 residues: 2,3-dihydroxyphenylpropionate/2,3-dihydroxicinnamic acid 1,2-dioxygenase (313 aa).

His-115 serves as the catalytic Proton donor. His-179 (proton acceptor) is an active-site residue.

The protein belongs to the LigB/MhpB extradiol dioxygenase family. Homotetramer. Fe(2+) serves as cofactor.

The enzyme catalyses 3-(2,3-dihydroxyphenyl)propanoate + O2 = (2Z,4E)-2-hydroxy-6-oxonona-2,4-dienedioate + H(+). The catalysed reaction is (2E)-3-(2,3-dihydroxyphenyl)prop-2-enoate + O2 = (2Z,4E,7E)-2-hydroxy-6-oxonona-2,4,7-trienedioate + H(+). The protein operates within aromatic compound metabolism; 3-phenylpropanoate degradation. In terms of biological role, catalyzes the non-heme iron(II)-dependent oxidative cleavage of 2,3-dihydroxyphenylpropionic acid and 2,3-dihydroxicinnamic acid into 2-hydroxy-6-ketononadienedioate and 2-hydroxy-6-ketononatrienedioate, respectively. This is 2,3-dihydroxyphenylpropionate/2,3-dihydroxicinnamic acid 1,2-dioxygenase from Mycolicibacterium smegmatis (strain ATCC 700084 / mc(2)155) (Mycobacterium smegmatis).